Here is a 240-residue protein sequence, read N- to C-terminus: PF03932 family protein CutC (240 aa).

Belongs to the CutC family.

It localises to the cytoplasm. This Xanthomonas axonopodis pv. citri (strain 306) protein is PF03932 family protein CutC.